We begin with the raw amino-acid sequence, 371 residues long: 3-isopropylmalate dehydrogenase B (371 aa).

NAD(+) is bound at residue Gly-79–Glu-93. 4 residues coordinate substrate: Arg-100, Arg-110, Arg-142, and Asp-229. Mg(2+) contacts are provided by Asp-229, Asp-254, and Asp-258. An NAD(+)-binding site is contributed by Gly-296–Asn-308.

The protein belongs to the isocitrate and isopropylmalate dehydrogenases family. As to quaternary structure, homodimer. Requires Mg(2+) as cofactor. It depends on Mn(2+) as a cofactor.

The protein localises to the cytoplasm. The enzyme catalyses (2R,3S)-3-isopropylmalate + NAD(+) = 4-methyl-2-oxopentanoate + CO2 + NADH. Its pathway is amino-acid biosynthesis; L-leucine biosynthesis; L-leucine from 3-methyl-2-oxobutanoate: step 3/4. Its function is as follows. Catalyzes the oxidation of 3-carboxy-2-hydroxy-4-methylpentanoate (3-isopropylmalate) to 3-carboxy-4-methyl-2-oxopentanoate. The product decarboxylates to 4-methyl-2 oxopentanoate. This is 3-isopropylmalate dehydrogenase B (leu2B) from Aspergillus niger.